The sequence spans 165 residues: Sorting nexin-12 (165 aa).

Positions 1 to 20 (MSDTAVADTRRLNSKPQDLT) are disordered. Residue S2 is modified to N-acetylserine. At Y23 the chain carries Phosphotyrosine. The PX domain maps to 28-151 (NFLEIDIFNP…HMFLQEEAID (124 aa)). Residues R71, S73, K96, and R118 each coordinate a 1,2-diacyl-sn-glycero-3-phospho-(1D-myo-inositol-3-phosphate). S73 is modified (phosphoserine).

Belongs to the sorting nexin family.

It localises to the membrane. In terms of biological role, may be involved in several stages of intracellular trafficking. The polypeptide is Sorting nexin-12 (Snx12) (Mus musculus (Mouse)).